We begin with the raw amino-acid sequence, 528 residues long: Na(+)/H(+) antiporter NhaB (528 aa).

11 consecutive transmembrane segments (helical) span residues Val23–Val43, Gly45–Leu65, Leu90–Met110, Cys136–Ile156, Leu204–Pro224, Ile242–Val262, Gly305–Ile325, Glu350–Ile370, Leu392–Gly412, Ala450–Ile470, and Ile479–Phe499.

Belongs to the NhaB Na(+)/H(+) (TC 2.A.34) antiporter family.

Its subcellular location is the cell inner membrane. The catalysed reaction is 2 Na(+)(in) + 3 H(+)(out) = 2 Na(+)(out) + 3 H(+)(in). Functionally, na(+)/H(+) antiporter that extrudes sodium in exchange for external protons. The sequence is that of Na(+)/H(+) antiporter NhaB from Vibrio campbellii (strain ATCC BAA-1116).